Consider the following 257-residue polypeptide: Gasdermin-like protein rcd-1-1 (257 aa).

This sequence belongs to the gasdermin family. In terms of assembly, heterooligomer; the heterooligomer with rcd-1-2 forms a ring-shaped pore complex when inserted in the membrane.

The protein localises to the cytoplasm. The protein resides in the cell membrane. Its function is as follows. Gasdermin-like protein involved in heterokaryon incompatibility, a process that ensures that during spontaneous vegetative cell fusion, only compatible cells from the same colony survive (non-self-recognition). In N.crassa, the rcd-1 locus exists as 2 incompatible alleles, rcd-1-1 (this entry) and rcd-1-2 (AC P0DW10). During the allorecognition process, forms a heterooligomer with rcd-1-2, thereby forming a functional gasdermin-like complex that binds to membranes and forms pores, triggering cell death. Binds negatively charged phospholipids, such as cardiolipin and phosphatidylserine. Also binds to phosphoinositides, preferentially to phosphatidylinositol-3-phosphate (PtdIns-3-P), PtdIns-5-P and PtdIns-3,5-P2. The sequence is that of Gasdermin-like protein rcd-1-1 from Neurospora crassa (strain ATCC 24698 / 74-OR23-1A / CBS 708.71 / DSM 1257 / FGSC 987).